We begin with the raw amino-acid sequence, 185 residues long: Ribosome-recycling factor (185 aa).

The protein belongs to the RRF family.

Its subcellular location is the cytoplasm. Responsible for the release of ribosomes from messenger RNA at the termination of protein biosynthesis. May increase the efficiency of translation by recycling ribosomes from one round of translation to another. This Clostridium botulinum (strain Eklund 17B / Type B) protein is Ribosome-recycling factor.